A 92-amino-acid chain; its full sequence is uncharacterized protein (92 aa).

This is an uncharacterized protein from Pseudoalteromonas phage PM2 (Bacteriophage PM2).